Reading from the N-terminus, the 295-residue chain is GTPase Era (295 aa).

The region spanning 4–171 is the Era-type G domain; the sequence is KSGFVTIIGR…IKQIVSFLPE (168 aa). A G1 region spans residues 12 to 19; sequence GRPNVGKS. Residue 12 to 19 coordinates GTP; that stretch reads GRPNVGKS. The G2 stretch occupies residues 38 to 42; that stretch reads QTTRN. A G3 region spans residues 59 to 62; that stretch reads DTPG. Residues 59-63 and 121-124 contribute to the GTP site; these read DTPGI and NKID. Residues 121-124 form a G4 region; the sequence is NKID. Residues 150 to 152 form a G5 region; it reads ISA. Residues 202–280 form the KH type-2 domain; it reads LDQEIPHGIA…FLELWVKVNE (79 aa).

The protein belongs to the TRAFAC class TrmE-Era-EngA-EngB-Septin-like GTPase superfamily. Era GTPase family. Monomer.

Its subcellular location is the cytoplasm. The protein resides in the cell membrane. An essential GTPase that binds both GDP and GTP, with rapid nucleotide exchange. Plays a role in 16S rRNA processing and 30S ribosomal subunit biogenesis and possibly also in cell cycle regulation and energy metabolism. The polypeptide is GTPase Era (Alkaliphilus metalliredigens (strain QYMF)).